The following is a 200-amino-acid chain: HTH-type transcriptional repressor KstR2 (200 aa).

An HTH tetR-type domain is found at 9–69 (NSRRGELLEL…ELLRGFLDWL (61 aa)). The segment at residues 32–51 (TVRDIADGAGILSGSLYHHF) is a DNA-binding region (H-T-H motif).

Homodimer.

Controls the expression of a small regulon that may play a role in the utilization of cholesterol. The sequence is that of HTH-type transcriptional repressor KstR2 (kstR2) from Mycobacterium tuberculosis (strain CDC 1551 / Oshkosh).